The primary structure comprises 219 residues: Thiopurine S-methyltransferase (219 aa).

The S-adenosyl-L-methionine site is built by W10, L45, E66, and R123.

The protein belongs to the class I-like SAM-binding methyltransferase superfamily. TPMT family.

It localises to the cytoplasm. The enzyme catalyses S-adenosyl-L-methionine + a thiopurine = S-adenosyl-L-homocysteine + a thiopurine S-methylether.. In Bordetella pertussis (strain Tohama I / ATCC BAA-589 / NCTC 13251), this protein is Thiopurine S-methyltransferase.